We begin with the raw amino-acid sequence, 199 residues long: Protein OPI10 homolog (199 aa).

The protein belongs to the OPI10 family.

The protein is Protein OPI10 homolog of Aedes aegypti (Yellowfever mosquito).